A 472-amino-acid chain; its full sequence is uncharacterized protein (472 aa).

6 helical membrane-spanning segments follow: residues 4 to 24 (IIIL…FSVI), 27 to 47 (APIC…LPFF), 56 to 76 (AGFI…GKVV), 99 to 119 (ILAI…LFVV), 140 to 160 (LIPG…LPGT), and 176 to 196 (IYAA…AGML). Positions 209-229 (GEGYGGFDSQNAPAPESIESA) are disordered. The span at 220–229 (APAPESIESA) shows a compositional bias: low complexity. Helical transmembrane passes span 240-260 (ALAF…TIYL), 286-306 (AAAI…TILF), 323-343 (IGGA…GGII), 372-392 (TALA…LSAM), and 448-468 (IFAI…IYSL).

This sequence belongs to the CitM (TC 2.A.11) transporter family.

The protein resides in the cell membrane. This is an uncharacterized protein from Bacillus subtilis (strain 168).